Reading from the N-terminus, the 199-residue chain is NAD(P)H dehydrogenase (quinone) (199 aa).

Positions 4 to 190 (VLVLYYSAYG…AGARYQGKTI (187 aa)) constitute a Flavodoxin-like domain. Residues 10 to 15 (SAYGHI) and 78 to 80 (TRF) contribute to the FMN site. Residue Y12 coordinates NAD(+). W98 is a substrate binding site. Residues 113 to 119 (STATQHG) and H134 each bind FMN.

This sequence belongs to the WrbA family. Requires FMN as cofactor.

It carries out the reaction a quinone + NADH + H(+) = a quinol + NAD(+). The catalysed reaction is a quinone + NADPH + H(+) = a quinol + NADP(+). The polypeptide is NAD(P)H dehydrogenase (quinone) (Rhodopseudomonas palustris (strain TIE-1)).